Here is a 301-residue protein sequence, read N- to C-terminus: Polyamine aminopropyltransferase (301 aa).

The 237-residue stretch at 4–240 (WHWLLEWQTP…GLWGFVYGGV (237 aa)) folds into the PABS domain. Position 33 (Gln33) interacts with S-methyl-5'-thioadenosine. His64 and Glu89 together coordinate spermidine. Residues Asp109 and 141-142 (DG) each bind S-methyl-5'-thioadenosine. Residue Asp159 is the Proton acceptor of the active site.

Belongs to the spermidine/spermine synthase family. Homotrimer.

Its subcellular location is the cytoplasm. It catalyses the reaction S-adenosyl 3-(methylsulfanyl)propylamine + putrescine = S-methyl-5'-thioadenosine + spermidine + H(+). The catalysed reaction is S-adenosyl 3-(methylsulfanyl)propylamine + propane-1,3-diamine = norspermidine + S-methyl-5'-thioadenosine + H(+). The enzyme catalyses norspermidine + S-adenosyl 3-(methylsulfanyl)propylamine = norspermine + S-methyl-5'-thioadenosine + H(+). It carries out the reaction S-adenosyl 3-(methylsulfanyl)propylamine + spermidine = thermospermine + S-methyl-5'-thioadenosine + H(+). It functions in the pathway amine and polyamine biosynthesis; spermidine biosynthesis; spermidine from putrescine: step 1/1. Competitively inhibited by 5-methylthioadenosine, 5-methylthiotubercidin, S-adenosyl(5)-3-thiopropylamine and S-adenosyl-3-thio-l,8-diaminooctane. Functionally, involved in the biosynthesis of polyamines which are thought to support the growth of thermophilic microorganisms under high-temperature conditions. It seems that long-chain and branched-chain of polyamines effectively stabilize DNA and RNA, respectively. Catalyzes the irreversible transfer of a propylamine group from the amino donor S-adenosylmethioninamine (decarboxy-AdoMet) to various amine acceptors such as putrescine (1,4-diaminobutane), 1,3-diaminopropane, sym-norspermidine and spermidine. The biosynthesis of caldopentamine from norspermine has been also observed, but with a very low activity. The reaction involves a nucleophilic attack on the C-3 methylene of the propylamine moiety adjacent to the positively charged sulfur of decarboxy-AdoMet. S-adenosylmethioninamine is the only amino donor. This is Polyamine aminopropyltransferase from Saccharolobus solfataricus (strain ATCC 35092 / DSM 1617 / JCM 11322 / P2) (Sulfolobus solfataricus).